A 399-amino-acid polypeptide reads, in one-letter code: Galactokinase (399 aa).

42–45 lines the substrate pocket; the sequence is EHTD. ATP-binding positions include Ser76 and 133–139; that span reads ASGLSSS. Mg(2+) is bound by residues Ser139 and Glu171. The active-site Proton acceptor is Asp183. Tyr233 lines the substrate pocket.

Belongs to the GHMP kinase family. GalK subfamily. As to quaternary structure, monomer.

The protein resides in the cytoplasm. The catalysed reaction is alpha-D-galactose + ATP = alpha-D-galactose 1-phosphate + ADP + H(+). Its pathway is carbohydrate metabolism; galactose metabolism. Its function is as follows. Catalyzes the transfer of the gamma-phosphate of ATP to D-galactose to form alpha-D-galactose-1-phosphate (Gal-1-P). In Lactococcus lactis subsp. lactis (strain IL1403) (Streptococcus lactis), this protein is Galactokinase.